A 294-amino-acid polypeptide reads, in one-letter code: 4-diphosphocytidyl-2-C-methyl-D-erythritol kinase (294 aa).

K11 is an active-site residue. P93–S103 lines the ATP pocket. The active site involves D135.

This sequence belongs to the GHMP kinase family. IspE subfamily.

The enzyme catalyses 4-CDP-2-C-methyl-D-erythritol + ATP = 4-CDP-2-C-methyl-D-erythritol 2-phosphate + ADP + H(+). It functions in the pathway isoprenoid biosynthesis; isopentenyl diphosphate biosynthesis via DXP pathway; isopentenyl diphosphate from 1-deoxy-D-xylulose 5-phosphate: step 3/6. In terms of biological role, catalyzes the phosphorylation of the position 2 hydroxy group of 4-diphosphocytidyl-2C-methyl-D-erythritol. The chain is 4-diphosphocytidyl-2-C-methyl-D-erythritol kinase from Chlorobium phaeobacteroides (strain DSM 266 / SMG 266 / 2430).